Reading from the N-terminus, the 172-residue chain is Translation initiation factor IF-3 (172 aa).

This sequence belongs to the IF-3 family. As to quaternary structure, monomer.

It localises to the cytoplasm. In terms of biological role, IF-3 binds to the 30S ribosomal subunit and shifts the equilibrium between 70S ribosomes and their 50S and 30S subunits in favor of the free subunits, thus enhancing the availability of 30S subunits on which protein synthesis initiation begins. This chain is Translation initiation factor IF-3, found in Haemophilus influenzae (strain ATCC 51907 / DSM 11121 / KW20 / Rd).